The chain runs to 228 residues: L-ribulose-5-phosphate 4-epimerase UlaF (228 aa).

Substrate-binding positions include 26-27, 43-44, and 72-73; these read GN, SG, and SS. Zn(2+) is bound by residues aspartate 74, histidine 93, and histidine 95. Catalysis depends on aspartate 118, which acts as the Proton donor/acceptor. A Zn(2+)-binding site is contributed by histidine 167. Tyrosine 225 serves as the catalytic Proton donor/acceptor.

Belongs to the aldolase class II family. AraD/FucA subfamily. It depends on Zn(2+) as a cofactor.

It catalyses the reaction L-ribulose 5-phosphate = D-xylulose 5-phosphate. It participates in cofactor degradation; L-ascorbate degradation; D-xylulose 5-phosphate from L-ascorbate: step 4/4. Its function is as follows. Catalyzes the isomerization of L-ribulose 5-phosphate to D-xylulose 5-phosphate. Is involved in the anaerobic L-ascorbate utilization. This is L-ribulose-5-phosphate 4-epimerase UlaF from Escherichia fergusonii (strain ATCC 35469 / DSM 13698 / CCUG 18766 / IAM 14443 / JCM 21226 / LMG 7866 / NBRC 102419 / NCTC 12128 / CDC 0568-73).